The sequence spans 283 residues: 4-diphosphocytidyl-2-C-methyl-D-erythritol kinase (283 aa).

Lys-10 is a catalytic residue. 99-109 (PMGGGLGGGSS) is a binding site for ATP. Asp-141 is an active-site residue.

It belongs to the GHMP kinase family. IspE subfamily. In terms of assembly, homodimer.

It catalyses the reaction 4-CDP-2-C-methyl-D-erythritol + ATP = 4-CDP-2-C-methyl-D-erythritol 2-phosphate + ADP + H(+). Its pathway is isoprenoid biosynthesis; isopentenyl diphosphate biosynthesis via DXP pathway; isopentenyl diphosphate from 1-deoxy-D-xylulose 5-phosphate: step 3/6. Its function is as follows. Catalyzes the phosphorylation of the position 2 hydroxy group of 4-diphosphocytidyl-2C-methyl-D-erythritol. This Salmonella choleraesuis (strain SC-B67) protein is 4-diphosphocytidyl-2-C-methyl-D-erythritol kinase.